The following is a 655-amino-acid chain: p-hydroxybenzoic acid efflux pump subunit AaeB (655 aa).

11 helical membrane passes run 13–33 (FAVK…HFQL), 38–58 (WAVL…GGEP), 69–89 (LRII…ISMI), 93–113 (LLMI…SSLV), 121–141 (WGLS…EPLL), 152–172 (EIVI…PRSI), 370–390 (LFWL…IAVV), 407–427 (FIYG…VIIP), 431–451 (QSML…GIEV), 459–479 (MGAL…TFHF), and 482–502 (FLDS…VILL).

The protein belongs to the aromatic acid exporter ArAE (TC 2.A.85) family.

The protein resides in the cell inner membrane. Forms an efflux pump with AaeA. Could function as a metabolic relief valve, allowing to eliminate certain compounds when they accumulate to high levels in the cell. In Salmonella arizonae (strain ATCC BAA-731 / CDC346-86 / RSK2980), this protein is p-hydroxybenzoic acid efflux pump subunit AaeB.